A 123-amino-acid polypeptide reads, in one-letter code: Small ribosomal subunit protein uS12 (123 aa).

Positions 9–32 (ANPREVQKSRKKVPALQQSPQKRG) are disordered. Asp89 carries the post-translational modification 3-methylthioaspartic acid.

It belongs to the universal ribosomal protein uS12 family. In terms of assembly, part of the 30S ribosomal subunit. Contacts proteins S8 and S17. May interact with IF1 in the 30S initiation complex.

Its function is as follows. With S4 and S5 plays an important role in translational accuracy. Interacts with and stabilizes bases of the 16S rRNA that are involved in tRNA selection in the A site and with the mRNA backbone. Located at the interface of the 30S and 50S subunits, it traverses the body of the 30S subunit contacting proteins on the other side and probably holding the rRNA structure together. The combined cluster of proteins S8, S12 and S17 appears to hold together the shoulder and platform of the 30S subunit. The protein is Small ribosomal subunit protein uS12 of Bradyrhizobium sp. (strain BTAi1 / ATCC BAA-1182).